The sequence spans 346 residues: Very-long-chain 3-oxoacyl-CoA reductase (346 aa).

The helical transmembrane segment at 26 to 46 (TASVLLVAGGWFVVSRVWTFL) threads the bilayer. NADP(+) is bound by residues I71, D126, D134, N153, Y220, K224, I253, and S255. Y220 functions as the Proton donor in the catalytic mechanism. The active-site Lowers pKa of active site Tyr is K224.

This sequence belongs to the short-chain dehydrogenases/reductases (SDR) family.

The protein resides in the endoplasmic reticulum membrane. The enzyme catalyses a very-long-chain (3R)-3-hydroxyacyl-CoA + NADP(+) = a very-long-chain 3-oxoacyl-CoA + NADPH + H(+). It participates in lipid metabolism; fatty acid biosynthesis. Its function is as follows. Component of the microsomal membrane bound fatty acid elongation system, which produces the 26-carbon very long-chain fatty acids (VLCFA) from palmitate. Catalyzes the reduction of the 3-ketoacyl-CoA intermediate that is formed in each cycle of fatty acid elongation. VLCFAs serve as precursors for ceramide and sphingolipids. This chain is Very-long-chain 3-oxoacyl-CoA reductase, found in Emericella nidulans (strain FGSC A4 / ATCC 38163 / CBS 112.46 / NRRL 194 / M139) (Aspergillus nidulans).